A 233-amino-acid polypeptide reads, in one-letter code: Small ribosomal subunit protein uS2 (233 aa).

It belongs to the universal ribosomal protein uS2 family.

This chain is Small ribosomal subunit protein uS2, found in Bacillus cereus (strain G9842).